A 165-amino-acid polypeptide reads, in one-letter code: Large ribosomal subunit protein uL11 (165 aa).

Position 38 is a phosphoserine (Ser38). Lys40 participates in a covalent cross-link: Glycyl lysine isopeptide (Lys-Gly) (interchain with G-Cter in SUMO2). Residue Lys48 forms a Glycyl lysine isopeptide (Lys-Gly) (interchain with G-Cter in ubiquitin) linkage. Lys54 is subject to N6-acetyllysine. A Glycyl lysine isopeptide (Lys-Gly) (interchain with G-Cter in ubiquitin) cross-link involves residue Lys83. Ser165 carries the phosphoserine modification.

This sequence belongs to the universal ribosomal protein uL11 family. As to quaternary structure, component of the large ribosomal subunit. Mature ribosomes consist of a small (40S) and a large (60S) subunit. The 40S subunit contains about 33 different proteins and 1 molecule of RNA (18S). The 60S subunit contains about 49 different proteins and 3 molecules of RNA (28S, 5.8S and 5S). In terms of processing, ubiquitinated at Lys-48 and Lys-83 by RNF14 and RNF25 in response to ribosome collisions (ribosome stalling).

It localises to the cytoplasm. Its function is as follows. Component of the large ribosomal subunit. The ribosome is a large ribonucleoprotein complex responsible for the synthesis of proteins in the cell. Binds directly to 26S ribosomal RNA. This chain is Large ribosomal subunit protein uL11 (Rpl12), found in Rattus norvegicus (Rat).